Here is a 509-residue protein sequence, read N- to C-terminus: ATP synthase subunit alpha (509 aa).

ATP is bound at residue 169-176 (GDRQTGKT).

The protein belongs to the ATPase alpha/beta chains family. As to quaternary structure, F-type ATPases have 2 components, CF(1) - the catalytic core - and CF(0) - the membrane proton channel. CF(1) has five subunits: alpha(3), beta(3), gamma(1), delta(1), epsilon(1). CF(0) has three main subunits: a(1), b(2) and c(9-12). The alpha and beta chains form an alternating ring which encloses part of the gamma chain. CF(1) is attached to CF(0) by a central stalk formed by the gamma and epsilon chains, while a peripheral stalk is formed by the delta and b chains.

It is found in the cell inner membrane. The enzyme catalyses ATP + H2O + 4 H(+)(in) = ADP + phosphate + 5 H(+)(out). In terms of biological role, produces ATP from ADP in the presence of a proton gradient across the membrane. The alpha chain is a regulatory subunit. The chain is ATP synthase subunit alpha from Methylocella silvestris (strain DSM 15510 / CIP 108128 / LMG 27833 / NCIMB 13906 / BL2).